The sequence spans 176 residues: NAD(P)H-quinone oxidoreductase subunit I, chloroplastic (176 aa).

2 4Fe-4S ferredoxin-type domains span residues 55 to 84 (GRIH…VDWE) and 95 to 124 (LNYS…MTEE). Residues cysteine 64, cysteine 67, cysteine 70, cysteine 74, cysteine 104, cysteine 107, cysteine 110, and cysteine 114 each contribute to the [4Fe-4S] cluster site.

The protein belongs to the complex I 23 kDa subunit family. NDH is composed of at least 16 different subunits, 5 of which are encoded in the nucleus. Requires [4Fe-4S] cluster as cofactor.

It is found in the plastid. Its subcellular location is the chloroplast thylakoid membrane. The catalysed reaction is a plastoquinone + NADH + (n+1) H(+)(in) = a plastoquinol + NAD(+) + n H(+)(out). It carries out the reaction a plastoquinone + NADPH + (n+1) H(+)(in) = a plastoquinol + NADP(+) + n H(+)(out). In terms of biological role, NDH shuttles electrons from NAD(P)H:plastoquinone, via FMN and iron-sulfur (Fe-S) centers, to quinones in the photosynthetic chain and possibly in a chloroplast respiratory chain. The immediate electron acceptor for the enzyme in this species is believed to be plastoquinone. Couples the redox reaction to proton translocation, and thus conserves the redox energy in a proton gradient. This Populus alba (White poplar) protein is NAD(P)H-quinone oxidoreductase subunit I, chloroplastic.